Consider the following 253-residue polypeptide: Phosphate import ATP-binding protein PstB (253 aa).

Positions 7-248 (MHSKGLDFFY…PGNKQTEDYI (242 aa)) constitute an ABC transporter domain. 39-46 (GPSGCGKS) serves as a coordination point for ATP.

The protein belongs to the ABC transporter superfamily. Phosphate importer (TC 3.A.1.7) family. The complex is composed of two ATP-binding proteins (PstB), two transmembrane proteins (PstC and PstA) and a solute-binding protein (PstS).

The protein localises to the cell inner membrane. It catalyses the reaction phosphate(out) + ATP + H2O = ADP + 2 phosphate(in) + H(+). Part of the ABC transporter complex PstSACB involved in phosphate import. Responsible for energy coupling to the transport system. This is Phosphate import ATP-binding protein PstB from Oleidesulfovibrio alaskensis (strain ATCC BAA-1058 / DSM 17464 / G20) (Desulfovibrio alaskensis).